The primary structure comprises 302 residues: Ribosomal protein L11 methyltransferase (302 aa).

Positions 155, 176, 198, and 239 each coordinate S-adenosyl-L-methionine.

This sequence belongs to the methyltransferase superfamily. PrmA family.

The protein localises to the cytoplasm. The catalysed reaction is L-lysyl-[protein] + 3 S-adenosyl-L-methionine = N(6),N(6),N(6)-trimethyl-L-lysyl-[protein] + 3 S-adenosyl-L-homocysteine + 3 H(+). Functionally, methylates ribosomal protein L11. This is Ribosomal protein L11 methyltransferase from Caldicellulosiruptor saccharolyticus (strain ATCC 43494 / DSM 8903 / Tp8T 6331).